We begin with the raw amino-acid sequence, 151 residues long: Deoxyuridine 5'-triphosphate nucleotidohydrolase (151 aa).

Substrate contacts are provided by residues 70–72, Asn-83, 87–89, and Met-97; these read RSG and LID.

Belongs to the dUTPase family. Mg(2+) is required as a cofactor.

It carries out the reaction dUTP + H2O = dUMP + diphosphate + H(+). It participates in pyrimidine metabolism; dUMP biosynthesis; dUMP from dCTP (dUTP route): step 2/2. Functionally, this enzyme is involved in nucleotide metabolism: it produces dUMP, the immediate precursor of thymidine nucleotides and it decreases the intracellular concentration of dUTP so that uracil cannot be incorporated into DNA. The protein is Deoxyuridine 5'-triphosphate nucleotidohydrolase of Yersinia pseudotuberculosis serotype O:1b (strain IP 31758).